The primary structure comprises 501 residues: Probable cysteine desulfurase, mitochondrial (501 aa).

Residues 172 to 173 (AT), N252, Q280, and 300 to 302 (SAH) each bind pyridoxal 5'-phosphate. Residue K303 is modified to N6-(pyridoxal phosphate)lysine. T340 contacts pyridoxal 5'-phosphate. The active-site Cysteine persulfide intermediate is C425. C425 is a binding site for [2Fe-2S] cluster.

Belongs to the class-V pyridoxal-phosphate-dependent aminotransferase family. NifS/IscS subfamily. Requires pyridoxal 5'-phosphate as cofactor.

It is found in the mitochondrion. The catalysed reaction is (sulfur carrier)-H + L-cysteine = (sulfur carrier)-SH + L-alanine. Catalyzes the removal of elemental sulfur from cysteine to produce alanine. It supplies the inorganic sulfur for iron-sulfur (Fe-S) clusters. Plays a role in both tRNA-processing and mitochondrial metabolism. Involved in the 2-thio-modification of both 5-carboxymethylaminomethyl-2-thiouridine in mitochondrial tRNAs and 5-methoxycarbonylmethyl-2-thiouridine (mcm5s2U) in cytoplasmic tRNAs. This Schizosaccharomyces pombe (strain 972 / ATCC 24843) (Fission yeast) protein is Probable cysteine desulfurase, mitochondrial.